The following is a 436-amino-acid chain: EPS I polysaccharide export inner membrane protein EpsE (436 aa).

12 helical membrane-spanning segments follow: residues 20–40, 49–69, 91–111, 133–153, 160–180, 185–205, 234–254, 261–281, 307–327, 341–361, 375–395, and 396–416; these read VLGL…NILL, FGLF…LATG, LCAF…ALYL, AAIV…QYAM, ATIS…MGPI, LALT…LLVL, VLTT…LAAM, LALF…PATL, ALLF…LLAG, AASS…SVLL, FAMA…ALRL, and GFGA…LILF.

This sequence to E.coli bicyclomycin resistance protein (BCR).

Its subcellular location is the cell inner membrane. Functionally, probably involved in polymerization and/or export of exopolysaccharide EPS I which functions as a virulence factor. May play a role in export of EPS I or its intermediates across the membranes. This is EPS I polysaccharide export inner membrane protein EpsE (epsE) from Ralstonia solanacearum (Pseudomonas solanacearum).